The primary structure comprises 69 residues: Small, acid-soluble spore protein I (69 aa).

Belongs to the SspI family.

Its subcellular location is the spore core. This Geobacillus kaustophilus (strain HTA426) protein is Small, acid-soluble spore protein I.